A 472-amino-acid chain; its full sequence is MHPGVLAAFLFLSWTRCWSLPVPNDDDDDDDMSEEDFQLAERYLKSYYYPLNPAGILKKTAANSVVDRLREMQSFFGLEVTGKLDDNTLDIMKKPRCGVPDVGEYNVFPRTLKWPKMNLTYRIVNYTPDLTHSEVEKAFKKAFKVWSDVTPLNFTRLYNGTADIMISFGTKEHGDFYPFDGPSGLLAHAFPPGPNYGGDAHFDDDETWTSSSKGYNLFLVAAHEFGHSLGLDHSKDPGALMFPIYTYTGKSHFVLPDDDVQGIQYLYGPGDEDPNPKHPKTPDKCDPSLSLDAITSLRGETMVFKDRFFWRLHPQLVDAELFLTKSFWPELPNRIDAAYEHPSKDLIFIFRGRKFWALNGYDILEGYPQKISELGFPKDVKKISAAVHFEDTGKTLFFSGNQVWRYDDTNRMMDKDYPRLIEEDFPGIGDKVDAVYEKNGYIYFFNGPIQFEYSIWSNRIVRVMPTNSLLWC.

Positions 1–19 are cleaved as a signal peptide; sequence MHPGVLAAFLFLSWTRCWS. Residues 20–104 constitute a propeptide, activation peptide; it reads LPVPNDDDDD…PRCGVPDVGE (85 aa). The Cysteine switch signature appears at 95–102; the sequence is PRCGVPDV. Residue Cys97 coordinates Zn(2+). Asn118 carries N-linked (GlcNAc...) asparagine glycosylation. A Ca(2+)-binding site is contributed by Asp129. Residues Asn153 and Asn159 are each glycosylated (N-linked (GlcNAc...) asparagine). A Ca(2+)-binding site is contributed by Asp163. The Zn(2+) site is built by His173 and Asp175. An interaction with TIMP2 region spans residues 177 to 247; it reads YPFDGPSGLL…GALMFPIYTY (71 aa). The Ca(2+) site is built by Asp180, Gly181, Ser183, and Leu185. His188 provides a ligand contact to Zn(2+). Residues Asn195, Gly197, and Asp199 each coordinate Ca(2+). Zn(2+) is bound at residue His201. Ca(2+) is bound by residues Asp203, Asp204, and Glu206. His223 provides a ligand contact to Zn(2+). The active site involves Glu224. Positions 227, 233, and 241 each coordinate Zn(2+). The interval 269–472 is interaction with collagen; that stretch reads PGDEDPNPKH…VMPTNSLLWC (204 aa). 4 Hemopexin repeats span residues 282–331, 332–378, 380–428, and 429–472; these read PDKC…WPEL, PNRI…GFPK, VKKI…FPGI, and GDKV…LLWC. Cys285 and Cys472 form a disulfide bridge. Asp292, Ile294, Asp336, and Ala338 together coordinate Ca(2+). Phosphotyrosine; by PKDCC is present on Tyr367. Positions 384, 386, 433, and 435 each coordinate Ca(2+).

Belongs to the peptidase M10A family. Ca(2+) is required as a cofactor. It depends on Zn(2+) as a cofactor. Post-translationally, the proenzyme is activated by removal of the propeptide; this cleavage can be effected by other matrix metalloproteinases, such as MMP2, MMP3 and MMP14 and may involve several cleavage steps. Cleavage can also be autocatalytic, after partial maturation by another protease or after treatment with 4-aminophenylmercuric acetate (APMA) (in vitro). N-glycosylated. In terms of processing, tyrosine phosphorylated by PKDCC/VLK. As to expression, seems to be specific to breast carcinomas.

The protein localises to the secreted. It is found in the extracellular space. The protein resides in the extracellular matrix. Functionally, plays a role in the degradation of extracellular matrix proteins including fibrillar collagen, fibronectin, TNC and ACAN. Cleaves triple helical collagens, including type I, type II and type III collagen, but has the highest activity with soluble type II collagen. Can also degrade collagen type IV, type XIV and type X. May also function by activating or degrading key regulatory proteins, such as TGFB1 and CCN2. Plays a role in wound healing, tissue remodeling, cartilage degradation, bone development, bone mineralization and ossification. Required for normal embryonic bone development and ossification. Plays a role in the healing of bone fractures via endochondral ossification. Plays a role in wound healing, probably by a mechanism that involves proteolytic activation of TGFB1 and degradation of CCN2. Plays a role in keratinocyte migration during wound healing. May play a role in cell migration and in tumor cell invasion. In Equus caballus (Horse), this protein is Collagenase 3 (MMP13).